Here is a 283-residue protein sequence, read N- to C-terminus: MVSKILMYGLPSAAVAVGTALLNEDNRNTIFRKAFAFTQNHTPKSFDEHFPRGEWDKNWDFRDPTSLVDKSKWEKADEVGKKKLLEECKATASRNIFLIRHGQYHLDREQKHLTELGREQAELLGKRLANSDIKFTNMTMSTMTRATETANIILKHLPGDLPKSSSSLIEEGPPYPPVPDHKTWRPLDPEFYTEAARIESAFRKLIHRAPPSQKEDSYELIVCHANVIRYFICRALQFPPEGWLRMSLGNCSITWLVIRPKGHVSIRSVGDIGHLTPNKISFT.

The chain crosses the membrane as a helical span at residues 7–23 (MYGLPSAAVAVGTALLN).

It belongs to the phosphoglycerate mutase family. BPG-dependent PGAM subfamily. As to quaternary structure, interacts with skn-1.

The protein localises to the mitochondrion outer membrane. It carries out the reaction O-phospho-L-seryl-[protein] + H2O = L-seryl-[protein] + phosphate. It catalyses the reaction O-phospho-L-threonyl-[protein] + H2O = L-threonyl-[protein] + phosphate. Displays phosphatase activity for serine/threonine residues. Has apparently no phosphoglycerate mutase activity. This Caenorhabditis briggsae protein is Serine/threonine-protein phosphatase Pgam5, mitochondrial (pgam-5).